A 334-amino-acid polypeptide reads, in one-letter code: Transcription initiation factor IIB (334 aa).

The segment at 34–65 (TESVCPECKSRQLVHDYERAELVCQNCGLVID) adopts a TFIIB-type zinc-finger fold. Zn(2+) contacts are provided by Cys38, Cys41, Cys57, and Cys60. Tandem repeats lie at residues 151-234 (SELD…SREL) and 245-326 (DYVP…ELAE).

It belongs to the TFIIB family.

In terms of biological role, stabilizes TBP binding to an archaeal box-A promoter. Also responsible for recruiting RNA polymerase II to the pre-initiation complex (DNA-TBP-TFIIB). This chain is Transcription initiation factor IIB, found in Methanosphaerula palustris (strain ATCC BAA-1556 / DSM 19958 / E1-9c).